A 144-amino-acid chain; its full sequence is Large ribosomal subunit protein uL15 (144 aa).

The disordered stretch occupies residues 1-52 (MRLNTLSPAEGAKHAPKRVGRGIGSGLGKTAGRGHKGQNSRSGGGVRRGFEG). The span at 21-31 (RGIGSGLGKTA) shows a compositional bias: gly residues.

The protein belongs to the universal ribosomal protein uL15 family. In terms of assembly, part of the 50S ribosomal subunit.

Binds to the 23S rRNA. This chain is Large ribosomal subunit protein uL15, found in Yersinia pseudotuberculosis serotype O:1b (strain IP 31758).